The following is an 83-amino-acid chain: Small ribosomal subunit protein bS16 (83 aa).

It belongs to the bacterial ribosomal protein bS16 family.

In Shewanella baltica (strain OS223), this protein is Small ribosomal subunit protein bS16.